The sequence spans 258 residues: UPF0246 protein HI_0984 (258 aa).

This sequence belongs to the UPF0246 family.

The polypeptide is UPF0246 protein HI_0984 (Haemophilus influenzae (strain ATCC 51907 / DSM 11121 / KW20 / Rd)).